The following is a 404-amino-acid chain: Cysteine desulfurase IscS (404 aa).

Pyridoxal 5'-phosphate is bound by residues 75-76 (AT), Asn-155, Gln-183, and 203-205 (SGH). At Lys-206 the chain carries N6-(pyridoxal phosphate)lysine. Thr-243 provides a ligand contact to pyridoxal 5'-phosphate. Catalysis depends on Cys-328, which acts as the Cysteine persulfide intermediate. Cys-328 is a binding site for [2Fe-2S] cluster.

The protein belongs to the class-V pyridoxal-phosphate-dependent aminotransferase family. NifS/IscS subfamily. As to quaternary structure, homodimer. Forms a heterotetramer with IscU, interacts with other sulfur acceptors. Requires pyridoxal 5'-phosphate as cofactor.

It localises to the cytoplasm. It catalyses the reaction (sulfur carrier)-H + L-cysteine = (sulfur carrier)-SH + L-alanine. The protein operates within cofactor biosynthesis; iron-sulfur cluster biosynthesis. Master enzyme that delivers sulfur to a number of partners involved in Fe-S cluster assembly, tRNA modification or cofactor biosynthesis. Catalyzes the removal of elemental sulfur and selenium atoms from cysteine and selenocysteine to produce alanine. Functions as a sulfur delivery protein for Fe-S cluster synthesis onto IscU, an Fe-S scaffold assembly protein, as well as other S acceptor proteins. Also functions as a selenium delivery protein in the pathway for the biosynthesis of selenophosphate. The chain is Cysteine desulfurase IscS from Salmonella arizonae (strain ATCC BAA-731 / CDC346-86 / RSK2980).